Reading from the N-terminus, the 470-residue chain is Ribulose bisphosphate carboxylase large chain (470 aa).

Lys-5 is subject to N6,N6,N6-trimethyllysine. The substrate site is built by Asn-114 and Thr-164. Lys-166 (proton acceptor) is an active-site residue. Residue Lys-168 participates in substrate binding. Mg(2+) contacts are provided by Lys-192, Asp-194, and Glu-195. Lys-192 carries the post-translational modification N6-carboxylysine. His-285 acts as the Proton acceptor in catalysis. Arg-286, His-318, and Ser-370 together coordinate substrate.

It belongs to the RuBisCO large chain family. Type I subfamily. In terms of assembly, heterohexadecamer of 8 large chains and 8 small chains; disulfide-linked. The disulfide link is formed within the large subunit homodimers. The cofactor is Mg(2+). Post-translationally, the disulfide bond which can form in the large chain dimeric partners within the hexadecamer appears to be associated with oxidative stress and protein turnover.

It is found in the plastid. The protein localises to the chloroplast. It carries out the reaction 2 (2R)-3-phosphoglycerate + 2 H(+) = D-ribulose 1,5-bisphosphate + CO2 + H2O. It catalyses the reaction D-ribulose 1,5-bisphosphate + O2 = 2-phosphoglycolate + (2R)-3-phosphoglycerate + 2 H(+). RuBisCO catalyzes two reactions: the carboxylation of D-ribulose 1,5-bisphosphate, the primary event in carbon dioxide fixation, as well as the oxidative fragmentation of the pentose substrate in the photorespiration process. Both reactions occur simultaneously and in competition at the same active site. The polypeptide is Ribulose bisphosphate carboxylase large chain (Bertiera breviflora).